Here is a 196-residue protein sequence, read N- to C-terminus: MSDLIAKTTLDQRIAALVTPVIEDLGYELVRLRVMSGKSPTLQIMAEKPEGGIEVDDCARISTEVSATLDVEDPIEDNYTLEVSSPGIDRPLTRLKDFDTWVGYEAKIETTELIEGRRRFKGALAGTEGDEVLIEIEEGTIGLKFEWLSDAKLVLTDDLIRDVLKGRKDAGQVDEAQFDEIQTIIDGDDEPPANTA.

This sequence belongs to the RimP family.

The protein localises to the cytoplasm. Its function is as follows. Required for maturation of 30S ribosomal subunits. This Dinoroseobacter shibae (strain DSM 16493 / NCIMB 14021 / DFL 12) protein is Ribosome maturation factor RimP.